A 271-amino-acid chain; its full sequence is Aquaporin-11 (271 aa).

Topologically, residues 1–14 (MSPLLGLRSELQDT) are cytoplasmic. A helical membrane pass occupies residues 15 to 35 (CTSLGLMLSVVLLMGLARVVA). Over 36 to 41 (RQQLHR) the chain is Lumenal. Residues 42–62 (PVAHAFVLEFLATFQLCCCTH) traverse the membrane as a helical segment. Residues 63-74 (ELQLLSEQHPAH) are Cytoplasmic-facing. A helical transmembrane segment spans residues 75-95 (PTWTLTLVYFFSLVHGLTLVG). Residues 96–163 (TSSNPCGVMM…ACKNPIRVDL (68 aa)) lie on the Lumenal side of the membrane. The short motif at 99–101 (NPC) is the NPC element. The helical transmembrane segment at 164–184 (LKAVITEAVCSFLFHSALLHF) threads the bilayer. The Cytoplasmic portion of the chain corresponds to 185–194 (QEVRTKLRIH). The chain crosses the membrane as a helical span at residues 195-215 (LLAALITFLVYAGGSLTGAVF). The NPA signature appears at 216-218 (NPA). The Lumenal segment spans residues 216 to 234 (NPALALSLHFMCFDEAFPQ). A helical transmembrane segment spans residues 235-255 (FFIVYWLAPSLGILLMILMFS). The Cytoplasmic portion of the chain corresponds to 256 to 271 (FFLPWLHNNHTINKKE).

The protein belongs to the MIP/aquaporin (TC 1.A.8) family. AQP11/AQP12 subfamily. As to quaternary structure, homodimer; disulfide-linked. Homotetramer. Can also form homomultimer. Post-translationally, not glycosylated. In terms of tissue distribution, detected in the sperm head and tail (at protein level). Expressed in subcutaneous adipocytes. Expressed in testis, kidney and ejaculated spermatozoa.

The protein localises to the endoplasmic reticulum membrane. Its subcellular location is the cytoplasmic vesicle membrane. It localises to the cell membrane. The enzyme catalyses H2O(in) = H2O(out). The catalysed reaction is glycerol(in) = glycerol(out). It catalyses the reaction H2O2(out) = H2O2(in). Its function is as follows. Channel protein that facilitates the transport of water, glycerol and hydrogen peroxide across membrane of cell or organelles guaranteeing intracellular homeostasis in several organes like liver, kidney and brain. In situation of stress, participates in endoplasmic reticulum (ER) homeostasis by regulating redox homeostasis through the transport of hydrogen peroxide across the endoplasmic reticulum membrane thereby regulating the oxidative stress through the NADPH oxidase 2 pathway. Plays a role by maintaining an environment suitable for translation or protein foldings in the ER lumen namely by participating in the PKD1 glycosylation processing resulting in regulation of PKD1 membrane trafficking thereby preventing the accumulation of unfolding protein in ER. Plays a role in the proximal tubule function by regulating its endosomal acidification. May play a role in postnatal kidney development. This chain is Aquaporin-11, found in Homo sapiens (Human).